The following is a 361-amino-acid chain: Chorismate synthase (361 aa).

2 residues coordinate NADP(+): Arg48 and Arg54. Residues 131 to 133 (RSS), 243 to 244 (NA), Gly287, 302 to 306 (KPTSS), and Arg328 each bind FMN.

Belongs to the chorismate synthase family. Homotetramer. It depends on FMNH2 as a cofactor.

The catalysed reaction is 5-O-(1-carboxyvinyl)-3-phosphoshikimate = chorismate + phosphate. Its pathway is metabolic intermediate biosynthesis; chorismate biosynthesis; chorismate from D-erythrose 4-phosphate and phosphoenolpyruvate: step 7/7. Its function is as follows. Catalyzes the anti-1,4-elimination of the C-3 phosphate and the C-6 proR hydrogen from 5-enolpyruvylshikimate-3-phosphate (EPSP) to yield chorismate, which is the branch point compound that serves as the starting substrate for the three terminal pathways of aromatic amino acid biosynthesis. This reaction introduces a second double bond into the aromatic ring system. This Rhodopseudomonas palustris (strain BisB5) protein is Chorismate synthase.